Reading from the N-terminus, the 422-residue chain is Phospho-N-acetylmuramoyl-pentapeptide-transferase (422 aa).

The next 9 membrane-spanning stretches (helical) occupy residues 28–48 (LMAV…FINL), 71–91 (VGVP…PCLL), 95–115 (LDNI…SLGF), 136–156 (IIGQ…SPDV), 211–231 (AGWF…SNGA), 239–259 (GMAA…AYVS), 279–299 (LVIY…YNAY), 313–333 (IGGI…IPIL), and 399–419 (KITV…IITL).

Belongs to the glycosyltransferase 4 family. MraY subfamily. Mg(2+) serves as cofactor.

It is found in the cell inner membrane. The enzyme catalyses UDP-N-acetyl-alpha-D-muramoyl-L-alanyl-gamma-D-glutamyl-meso-2,6-diaminopimeloyl-D-alanyl-D-alanine + di-trans,octa-cis-undecaprenyl phosphate = di-trans,octa-cis-undecaprenyl diphospho-N-acetyl-alpha-D-muramoyl-L-alanyl-D-glutamyl-meso-2,6-diaminopimeloyl-D-alanyl-D-alanine + UMP. It participates in cell wall biogenesis; peptidoglycan biosynthesis. Catalyzes the initial step of the lipid cycle reactions in the biosynthesis of the cell wall peptidoglycan: transfers peptidoglycan precursor phospho-MurNAc-pentapeptide from UDP-MurNAc-pentapeptide onto the lipid carrier undecaprenyl phosphate, yielding undecaprenyl-pyrophosphoryl-MurNAc-pentapeptide, known as lipid I. The polypeptide is Phospho-N-acetylmuramoyl-pentapeptide-transferase (Bacteroides thetaiotaomicron (strain ATCC 29148 / DSM 2079 / JCM 5827 / CCUG 10774 / NCTC 10582 / VPI-5482 / E50)).